A 143-amino-acid polypeptide reads, in one-letter code: Large ribosomal subunit protein uL11 (143 aa).

The protein belongs to the universal ribosomal protein uL11 family. As to quaternary structure, part of the ribosomal stalk of the 50S ribosomal subunit. Interacts with L10 and the large rRNA to form the base of the stalk. L10 forms an elongated spine to which L12 dimers bind in a sequential fashion forming a multimeric L10(L12)X complex. Post-translationally, one or more lysine residues are methylated.

In terms of biological role, forms part of the ribosomal stalk which helps the ribosome interact with GTP-bound translation factors. This chain is Large ribosomal subunit protein uL11, found in Nitrosospira multiformis (strain ATCC 25196 / NCIMB 11849 / C 71).